Reading from the N-terminus, the 279-residue chain is Biotin synthase (279 aa).

The Radical SAM core domain occupies 2–232; sequence VRNSRLDICS…NVTIKIAAGR (231 aa). The [4Fe-4S] cluster site is built by Cys20, Cys24, and Cys27. [2Fe-2S] cluster contacts are provided by Cys96, Cys156, and Lys227.

This sequence belongs to the radical SAM superfamily. Biotin synthase family. As to quaternary structure, homodimer. Requires [4Fe-4S] cluster as cofactor. It depends on [2Fe-2S] cluster as a cofactor.

The enzyme catalyses (4R,5S)-dethiobiotin + (sulfur carrier)-SH + 2 reduced [2Fe-2S]-[ferredoxin] + 2 S-adenosyl-L-methionine = (sulfur carrier)-H + biotin + 2 5'-deoxyadenosine + 2 L-methionine + 2 oxidized [2Fe-2S]-[ferredoxin]. Its pathway is cofactor biosynthesis; biotin biosynthesis; biotin from 7,8-diaminononanoate: step 2/2. Catalyzes the conversion of dethiobiotin (DTB) to biotin by the insertion of a sulfur atom into dethiobiotin via a radical-based mechanism. This is Biotin synthase from Thermotoga neapolitana (strain ATCC 49049 / DSM 4359 / NBRC 107923 / NS-E).